Consider the following 314-residue polypeptide: Mycothiol acetyltransferase (314 aa).

N-acetyltransferase domains follow at residues 18-156 (ATIR…RPLA) and 168-314 (IRIA…MYQL). E38 lines the 1D-myo-inositol 2-(L-cysteinylamino)-2-deoxy-alpha-D-glucopyranoside pocket. Position 92–94 (92–94 (VVV)) interacts with acetyl-CoA. Residues E195, K234, and E248 each coordinate 1D-myo-inositol 2-(L-cysteinylamino)-2-deoxy-alpha-D-glucopyranoside. Acetyl-CoA is bound by residues 252–254 (VGL) and 259–265 (QGHGLGR). Position 286 (Y286) interacts with 1D-myo-inositol 2-(L-cysteinylamino)-2-deoxy-alpha-D-glucopyranoside.

The protein belongs to the acetyltransferase family. MshD subfamily. In terms of assembly, monomer.

It catalyses the reaction 1D-myo-inositol 2-(L-cysteinylamino)-2-deoxy-alpha-D-glucopyranoside + acetyl-CoA = mycothiol + CoA + H(+). Catalyzes the transfer of acetyl from acetyl-CoA to desacetylmycothiol (Cys-GlcN-Ins) to form mycothiol. This chain is Mycothiol acetyltransferase, found in Catenulispora acidiphila (strain DSM 44928 / JCM 14897 / NBRC 102108 / NRRL B-24433 / ID139908).